A 2214-amino-acid polypeptide reads, in one-letter code: Genome polyprotein (2214 aa).

Disordered regions lie at residues 1 to 21 (MGAQ…VATG) and 600 to 619 (KPQK…VNSQ). Gly-2 carries the N-myristoyl glycine; by host lipid modification. The Cytoplasmic portion of the chain corresponds to 2-1525 (GAQVSSQKVG…NLNRAMTILQ (1524 aa)). Amphipathic alpha-helix stretches follow at residues 580–601 (QGIE…QPKP) and 581–601 (GIEE…QPKP). Over residues 606-619 (TAQSTPSTSGVNSQ) the composition is skewed to polar residues. Active-site for protease 2A activity residues include His-906 and Asp-924. Residues Cys-941 and Cys-943 each contribute to the Zn(2+) site. The active-site For protease 2A activity is Cys-995. Zn(2+) is bound by residues Cys-1001 and His-1003. The membrane-binding stretch occupies residues 1133 to 1205 (GDSWLKKFTE…HQSCPSQEQQ (73 aa)). Residues 1133 to 1271 (GDSWLKKFTE…SPGTGKSIAT (139 aa)) are oligomerization. The interval 1154–1158 (SNKIS) is RNA-binding. In terms of domain architecture, SF3 helicase spans 1237 to 1393 (ENTINNYIQF…SEHSIKGKLN (157 aa)). 1261–1268 (GSPGTGKS) contributes to the ATP binding site. 4 residues coordinate Zn(2+): Cys-1401, Cys-1404, Cys-1413, and Cys-1418. The C4-type zinc-finger motif lies at 1401–1418 (CKDCPQPANFKKCCPLVC). Residues 1445–1452 (ERNRRANI) form an RNA-binding region. The tract at residues 1456–1461 (MEALFQ) is oligomerization. The stretch at 1526 to 1541 (AVTTFAAVAAVVYVMY) is an intramembrane region. Residues 1542-2214 (KLFAGHQGAY…TLYRRWLDSF (673 aa)) are Cytoplasmic-facing. Residue Tyr-1551 is modified to O-(5'-phospho-RNA)-tyrosine. Residues 1571–1749 (GPGFDYAVAM…FAAALKRSYF (179 aa)) form the Peptidase C3 domain. Catalysis depends on for protease 3C activity residues His-1610, Glu-1641, and Cys-1717. The region spanning 1980–2095 (EKLFAFDYTG…SYPHEVDASL (116 aa)) is the RdRp catalytic domain. The Mg(2+) site is built by Asp-1986 and Asp-2081.

This sequence belongs to the picornaviruses polyprotein family. In terms of assembly, interacts with capsid protein VP1 and capsid protein VP3 to form heterotrimeric protomers. Interacts with capsid protein VP0, and capsid protein VP3 to form heterotrimeric protomers. Five protomers subsequently associate to form pentamers which serve as building blocks for the capsid. Interacts with capsid protein VP2, capsid protein VP3 and capsid protein VP4 following cleavage of capsid protein VP0. As to quaternary structure, interacts with capsid protein VP1 and capsid protein VP3 in the mature capsid. In terms of assembly, interacts with capsid protein VP0 and capsid protein VP1 to form heterotrimeric protomers. Five protomers subsequently associate to form pentamers which serve as building blocks for the capsid. Interacts with capsid protein VP4 in the mature capsid. Interacts with protein 2C; this interaction may be important for virion morphogenesis. Interacts with capsid protein VP1 and capsid protein VP3. As to quaternary structure, homodimer. In terms of assembly, homohexamer; forms a hexameric ring structure with 6-fold symmetry characteristic of AAA+ ATPases. Interacts (via N-terminus) with host RTN3 (via reticulon domain); this interaction is important for viral replication. Interacts with capsid protein VP3; this interaction may be important for virion morphogenesis. Interacts with protein 3CD. As to quaternary structure, homodimer. Interacts with host GBF1. Interacts (via GOLD domain) with host ACBD3 (via GOLD domain); this interaction allows the formation of a viral protein 3A/ACBD3 heterotetramer with a 2:2 stoichiometry, which will stimulate the recruitment of host PI4KB in order to synthesize PI4P at the viral RNA replication sites. In terms of assembly, interacts with RNA-directed RNA polymerase. Interacts with protein 3AB and with RNA-directed RNA polymerase. As to quaternary structure, interacts with Viral protein genome-linked and with protein 3CD. It depends on Mg(2+) as a cofactor. Specific enzymatic cleavages in vivo by the viral proteases yield processing intermediates and the mature proteins. Post-translationally, myristoylation is required for the formation of pentamers during virus assembly. Further assembly of 12 pentamers and a molecule of genomic RNA generates the provirion. In terms of processing, during virion maturation, immature virions are rendered infectious following cleavage of VP0 into VP4 and VP2. This maturation seems to be an autocatalytic event triggered by the presence of RNA in the capsid and it is followed by a conformational change infectious virion. Myristoylation is required during RNA encapsidation and formation of the mature virus particle. Post-translationally, VPg is uridylylated by the polymerase into VPg-pUpU. This acts as a nucleotide-peptide primer for the genomic RNA replication.

Its subcellular location is the virion. The protein resides in the host cytoplasm. It is found in the host cytoplasmic vesicle membrane. It localises to the host nucleus. The enzyme catalyses a ribonucleoside 5'-triphosphate + H2O = a ribonucleoside 5'-diphosphate + phosphate + H(+). It carries out the reaction Selective cleavage of Tyr-|-Gly bond in the picornavirus polyprotein.. The catalysed reaction is RNA(n) + a ribonucleoside 5'-triphosphate = RNA(n+1) + diphosphate. It catalyses the reaction Selective cleavage of Gln-|-Gly bond in the poliovirus polyprotein. In other picornavirus reactions Glu may be substituted for Gln, and Ser or Thr for Gly.. With respect to regulation, replication or transcription is subject to high level of random mutations by the nucleotide analog ribavirin. Its function is as follows. Forms an icosahedral capsid of pseudo T=3 symmetry with capsid proteins VP2 and VP3. The capsid is 300 Angstroms in diameter, composed of 60 copies of each capsid protein and enclosing the viral positive strand RNA genome. Capsid protein VP1 mainly forms the vertices of the capsid. Capsid protein VP1 interacts with host cell receptor to provide virion attachment to target host cells. This attachment induces virion internalization. Tyrosine kinases are probably involved in the entry process. After binding to its receptor, the capsid undergoes conformational changes. Capsid protein VP1 N-terminus (that contains an amphipathic alpha-helix) and capsid protein VP4 are externalized. Together, they shape a pore in the host membrane through which viral genome is translocated to host cell cytoplasm. Forms an icosahedral capsid of pseudo T=3 symmetry with capsid proteins VP2 and VP3. The capsid is 300 Angstroms in diameter, composed of 60 copies of each capsid protein and enclosing the viral positive strand RNA genome. In terms of biological role, lies on the inner surface of the capsid shell. After binding to the host receptor, the capsid undergoes conformational changes. Capsid protein VP4 is released, Capsid protein VP1 N-terminus is externalized, and together, they shape a pore in the host membrane through which the viral genome is translocated into the host cell cytoplasm. Functionally, component of immature procapsids, which is cleaved into capsid proteins VP4 and VP2 after maturation. Allows the capsid to remain inactive before the maturation step. Its function is as follows. Cysteine protease that cleaves viral polyprotein and specific host proteins. It is responsible for the autocatalytic cleavage between the P1 and P2 regions, which is the first cleavage occurring in the polyprotein. Also cleaves the host translation initiation factor EIF4G1, in order to shut down the capped cellular mRNA translation. Inhibits the host nucleus-cytoplasm protein and RNA trafficking by cleaving host members of the nuclear pores. Counteracts stress granule formation probably by antagonizing its assembly or promoting its dissassembly. Cleaves and inhibits host IFIH1/MDA5, thereby inhibiting the type-I IFN production and the establishment of the antiviral state. Cleaves and inhibits host MAVS, thereby inhibiting the type-I IFN production and the establishment of the antiviral state. Plays an essential role in the virus replication cycle by acting as a viroporin. Creates a pore in the host endoplasmic reticulum and as a consequence releases Ca2+ in the cytoplasm of infected cell. In turn, high levels of cytoplasmic calcium may trigger membrane trafficking and transport of viral ER-associated proteins to viroplasms, sites of viral genome replication. In terms of biological role, induces and associates with structural rearrangements of intracellular membranes. Displays RNA-binding, nucleotide binding and NTPase activities. May play a role in virion morphogenesis and viral RNA encapsidation by interacting with the capsid protein VP3. Functionally, localizes the viral replication complex to the surface of membranous vesicles. Together with protein 3CD binds the Cis-Active RNA Element (CRE) which is involved in RNA synthesis initiation. Acts as a cofactor to stimulate the activity of 3D polymerase, maybe through a nucleid acid chaperone activity. Its function is as follows. Localizes the viral replication complex to the surface of membranous vesicles. It inhibits host cell endoplasmic reticulum-to-Golgi apparatus transport and causes the disassembly of the Golgi complex, possibly through GBF1 interaction. This would result in depletion of MHC, trail receptors and IFN receptors at the host cell surface. Plays an essential role in viral RNA replication by recruiting ACBD3 and PI4KB at the viral replication sites, thereby allowing the formation of the rearranged membranous structures where viral replication takes place. Acts as a primer for viral RNA replication and remains covalently bound to viral genomic RNA. VPg is uridylylated prior to priming replication into VPg-pUpU. The oriI viral genomic sequence may act as a template for this. The VPg-pUpU is then used as primer on the genomic RNA poly(A) by the RNA-dependent RNA polymerase to replicate the viral genome. During genome replication, the VPg-RNA linkage is removed by the host TDP2, thereby accelerating replication. During the late stage of the replication cycle, host TDP2 is excluded from sites of viral RNA synthesis and encapsidation, allowing for the generation of progeny virions. In terms of biological role, involved in the viral replication complex and viral polypeptide maturation. It exhibits protease activity with a specificity and catalytic efficiency that is different from protease 3C. Protein 3CD lacks polymerase activity. Protein 3CD binds to the 5'UTR of the viral genome. Functionally, replicates the viral genomic RNA on the surface of intracellular membranes. May form linear arrays of subunits that propagate along a strong head-to-tail interaction called interface-I. Covalently attaches UMP to a tyrosine of VPg, which is used to prime RNA synthesis. The positive stranded RNA genome is first replicated at virus induced membranous vesicles, creating a dsRNA genomic replication form. This dsRNA is then used as template to synthesize positive stranded RNA genomes. ss(+)RNA genomes are either translated, replicated or encapsidated. Its function is as follows. Major viral protease that mediates proteolytic processing of the polyprotein. Cleaves host EIF5B, contributing to host translation shutoff. Also cleaves host PABPC1, contributing to host translation shutoff. Cleaves host NLRP1, triggers host N-glycine-mediated degradation of the autoinhibitory NLRP1 N-terminal fragment. The polypeptide is Genome polyprotein (Coxsackievirus A24 (strain EH24/70)).